A 197-amino-acid polypeptide reads, in one-letter code: Holliday junction branch migration complex subunit RuvA (197 aa).

The domain I stretch occupies residues 1 to 64; it reads MIDSIVGTIQ…LSELECYGFL (64 aa). Residues 65-143 form a domain II region; sequence TREERELFLK…KEFKVASTSG (79 aa). Residues 144–152 are flexible linker; that stretch reads TEEKTYEKL. The interval 152–197 is domain III; it reads LEEISLALLSLGYEIDEINQVLSSEDFSELSLEDGIKLALKKLSKI.

Belongs to the RuvA family. As to quaternary structure, homotetramer. Forms an RuvA(8)-RuvB(12)-Holliday junction (HJ) complex. HJ DNA is sandwiched between 2 RuvA tetramers; dsDNA enters through RuvA and exits via RuvB. An RuvB hexamer assembles on each DNA strand where it exits the tetramer. Each RuvB hexamer is contacted by two RuvA subunits (via domain III) on 2 adjacent RuvB subunits; this complex drives branch migration. In the full resolvosome a probable DNA-RuvA(4)-RuvB(12)-RuvC(2) complex forms which resolves the HJ.

The protein resides in the cytoplasm. Its function is as follows. The RuvA-RuvB-RuvC complex processes Holliday junction (HJ) DNA during genetic recombination and DNA repair, while the RuvA-RuvB complex plays an important role in the rescue of blocked DNA replication forks via replication fork reversal (RFR). RuvA specifically binds to HJ cruciform DNA, conferring on it an open structure. The RuvB hexamer acts as an ATP-dependent pump, pulling dsDNA into and through the RuvAB complex. HJ branch migration allows RuvC to scan DNA until it finds its consensus sequence, where it cleaves and resolves the cruciform DNA. This is Holliday junction branch migration complex subunit RuvA from Caldicellulosiruptor saccharolyticus (strain ATCC 43494 / DSM 8903 / Tp8T 6331).